A 533-amino-acid polypeptide reads, in one-letter code: Putative sel1-like repeat-containing protein L21 (533 aa).

Sel1-like repeat units follow at residues 105–140 (VLSQ…NQGL), 141–172 (SFAQ…QSGY), 173–206 (YLSN…NQGC), 207–242 (NISQ…KQGN), and 243–278 (YFSQ…NCGH).

The polypeptide is Putative sel1-like repeat-containing protein L21 (Acanthamoeba polyphaga mimivirus (APMV)).